The sequence spans 410 residues: DNA replication and repair protein RecF (410 aa).

30–37 (GPNGHGKT) provides a ligand contact to ATP.

Belongs to the RecF family.

It is found in the cytoplasm. Functionally, the RecF protein is involved in DNA metabolism; it is required for DNA replication and normal SOS inducibility. RecF binds preferentially to single-stranded, linear DNA. It also seems to bind ATP. The polypeptide is DNA replication and repair protein RecF (Rhodococcus jostii (strain RHA1)).